A 453-amino-acid polypeptide reads, in one-letter code: DDB1- and CUL4-associated factor 12 (453 aa).

The span at 1-12 (MARKAVSRKRKA) shows a compositional bias: basic residues. The interval 1-34 (MARKAVSRKRKASASPGAGSDAQGPQFGWDHSLH) is disordered. The required for nuclear location and interaction with MOV10 stretch occupies residues 1-38 (MARKAVSRKRKASASPGAGSDAQGPQFGWDHSLHKRKR). Ser-15 is subject to Phosphoserine. WD repeat units lie at residues 138–178 (QQGC…PVCV), 182–220 (GHKDWIFSIAWINDTMAVSGSRDGSMGLWEVTDDVLTKS), 250–289 (PDNCKVRALAFNNKNKELGAVSLDGYFHLWKAENTLSKLL), and 338–375 (ERGSGIRSVSFYEHIITVGTGQGSLLFYDIRAQRFLEE).

This sequence belongs to the WD repeat DCAF12 family. In terms of assembly, component of the DCX(DCAF12) E3 ubiquitin ligase complex, at least composed of CUL4 (CUL4A or CUL4B), DDB1, DCAF12 and RBX1.

Its subcellular location is the cytoplasm. The protein localises to the cytoskeleton. It is found in the microtubule organizing center. The protein resides in the centrosome. It localises to the nucleus. It functions in the pathway protein modification; protein ubiquitination. Functionally, substrate-recognition component of a DCX (DDB1-CUL4-X-box) E3 ubiquitin-protein ligase complex of the DesCEND (destruction via C-end degrons) pathway, which recognizes a C-degron located at the extreme C terminus of target proteins, leading to their ubiquitination and degradation. The C-degron recognized by the DesCEND pathway is usually a motif of less than ten residues and can be present in full-length proteins, truncated proteins or proteolytically cleaved forms. The DCX(DCAF12) complex specifically recognizes proteins with a diglutamate (Glu-Glu) at the C-terminus, such as MAGEA3, MAGEA6 and CCT5, leading to their ubiquitination and degradation. Ubiquitination of MAGEA3, MAGEA6 by DCX(DCAF12) complex is required for starvation-induced autophagy. Also directly recognizes the C-terminal glutamate-leucine (Glu-Leu) degron as an alternative degron in proteins such as MOV10, leading to their ubiquitination and degradation. Controls the protein level of MOV10 during spermatogenesis and in T cells, especially after their activation. This Mus musculus (Mouse) protein is DDB1- and CUL4-associated factor 12.